A 354-amino-acid polypeptide reads, in one-letter code: Ferredoxin--NADP reductase (354 aa).

Residues Asp-39, Gln-47, Tyr-52, Val-92, Phe-127, Asp-296, and Thr-337 each coordinate FAD.

The protein belongs to the ferredoxin--NADP reductase type 2 family. In terms of assembly, homodimer. FAD is required as a cofactor.

It carries out the reaction 2 reduced [2Fe-2S]-[ferredoxin] + NADP(+) + H(+) = 2 oxidized [2Fe-2S]-[ferredoxin] + NADPH. The polypeptide is Ferredoxin--NADP reductase (Albidiferax ferrireducens (strain ATCC BAA-621 / DSM 15236 / T118) (Rhodoferax ferrireducens)).